Reading from the N-terminus, the 101-residue chain is Small ribosomal subunit protein bS16 (101 aa).

This sequence belongs to the bacterial ribosomal protein bS16 family.

In Ureaplasma urealyticum serovar 10 (strain ATCC 33699 / Western), this protein is Small ribosomal subunit protein bS16.